A 146-amino-acid polypeptide reads, in one-letter code: 3-hydroxyacyl-[acyl-carrier-protein] dehydratase FabZ (146 aa).

Residue His-49 is part of the active site.

This sequence belongs to the thioester dehydratase family. FabZ subfamily.

It is found in the cytoplasm. The catalysed reaction is a (3R)-hydroxyacyl-[ACP] = a (2E)-enoyl-[ACP] + H2O. Its function is as follows. Involved in unsaturated fatty acids biosynthesis. Catalyzes the dehydration of short chain beta-hydroxyacyl-ACPs and long chain saturated and unsaturated beta-hydroxyacyl-ACPs. The chain is 3-hydroxyacyl-[acyl-carrier-protein] dehydratase FabZ from Psychrobacter arcticus (strain DSM 17307 / VKM B-2377 / 273-4).